The chain runs to 117 residues: Fluoride-specific ion channel FluC 2 (117 aa).

A run of 2 helical transmembrane segments spans residues 1-21 (MISI…RSAI) and 46-66 (FLIG…AFFV). Positions 71 and 74 each coordinate Na(+). The helical transmembrane segment at 95 to 115 (LFLNYSLLQFIIGFIACYIGY) threads the bilayer.

The protein belongs to the fluoride channel Fluc/FEX (TC 1.A.43) family.

It localises to the cell membrane. It carries out the reaction fluoride(in) = fluoride(out). Its activity is regulated as follows. Na(+) is not transported, but it plays an essential structural role and its presence is essential for fluoride channel function. In terms of biological role, fluoride-specific ion channel. Important for reducing fluoride concentration in the cell, thus reducing its toxicity. In Staphylococcus aureus (strain MRSA252), this protein is Fluoride-specific ion channel FluC 2.